Consider the following 163-residue polypeptide: 2-C-methyl-D-erythritol 2,4-cyclodiphosphate synthase (163 aa).

A divalent metal cation-binding residues include Asp-10 and His-12. Residues Asp-10–His-12 and His-36–Ser-37 contribute to the 4-CDP-2-C-methyl-D-erythritol 2-phosphate site. Residue His-44 participates in a divalent metal cation binding. Residues Asp-58–Gly-60, Phe-63–Asp-67, Thr-134–Glu-137, Phe-141, and Arg-144 contribute to the 4-CDP-2-C-methyl-D-erythritol 2-phosphate site.

This sequence belongs to the IspF family. Homotrimer. It depends on a divalent metal cation as a cofactor.

The enzyme catalyses 4-CDP-2-C-methyl-D-erythritol 2-phosphate = 2-C-methyl-D-erythritol 2,4-cyclic diphosphate + CMP. It participates in isoprenoid biosynthesis; isopentenyl diphosphate biosynthesis via DXP pathway; isopentenyl diphosphate from 1-deoxy-D-xylulose 5-phosphate: step 4/6. Functionally, involved in the biosynthesis of isopentenyl diphosphate (IPP) and dimethylallyl diphosphate (DMAPP), two major building blocks of isoprenoid compounds. Catalyzes the conversion of 4-diphosphocytidyl-2-C-methyl-D-erythritol 2-phosphate (CDP-ME2P) to 2-C-methyl-D-erythritol 2,4-cyclodiphosphate (ME-CPP) with a corresponding release of cytidine 5-monophosphate (CMP). The polypeptide is 2-C-methyl-D-erythritol 2,4-cyclodiphosphate synthase (Carboxydothermus hydrogenoformans (strain ATCC BAA-161 / DSM 6008 / Z-2901)).